Reading from the N-terminus, the 312-residue chain is Glyoxylate/hydroxypyruvate reductase A (312 aa).

The active site involves Arg-227. Catalysis depends on His-275, which acts as the Proton donor.

This sequence belongs to the D-isomer specific 2-hydroxyacid dehydrogenase family. GhrA subfamily.

Its subcellular location is the cytoplasm. It catalyses the reaction glycolate + NADP(+) = glyoxylate + NADPH + H(+). The catalysed reaction is (R)-glycerate + NAD(+) = 3-hydroxypyruvate + NADH + H(+). The enzyme catalyses (R)-glycerate + NADP(+) = 3-hydroxypyruvate + NADPH + H(+). Functionally, catalyzes the NADPH-dependent reduction of glyoxylate and hydroxypyruvate into glycolate and glycerate, respectively. The sequence is that of Glyoxylate/hydroxypyruvate reductase A from Salmonella dublin (strain CT_02021853).